We begin with the raw amino-acid sequence, 414 residues long: Esterase FrsA (414 aa).

This sequence belongs to the FrsA family.

The catalysed reaction is a carboxylic ester + H2O = an alcohol + a carboxylate + H(+). Its function is as follows. Catalyzes the hydrolysis of esters. In Escherichia coli O8 (strain IAI1), this protein is Esterase FrsA.